Reading from the N-terminus, the 160-residue chain is Adenosine 5'-monophosphoramidase HINT3 (160 aa).

The region spanning 24–132 (IFCTIAKGDD…LAPYSQLYKW (109 aa)) is the HIT domain. AMP is bound by residues 50–51 (DI) and 119–121 (HLH). The Histidine triad motif motif lies at 117-121 (HLHLH). The active-site Tele-AMP-histidine intermediate is the His-119.

The protein belongs to the HINT family. In terms of assembly, forms dimers to octamers and even larger oligomer.

The protein resides in the cytoplasm. It is found in the nucleus. It catalyses the reaction adenosine 5'-phosphoramidate + H2O = AMP + NH4(+). Exhibits adenosine 5'-monophosphoramidase activity, hydrolyzing purine nucleotide phosphoramidates with a single phosphate group such as adenosine 5'monophosphoramidate (AMP-NH2) to yield AMP and NH2. Hydrolyzes lysyl-AMP (AMP-N-epsilon-(N-alpha-acetyl lysine methyl ester)) generated by lysine tRNA ligase. The chain is Adenosine 5'-monophosphoramidase HINT3 (hint3) from Danio rerio (Zebrafish).